We begin with the raw amino-acid sequence, 379 residues long: Homoserine O-succinyltransferase (379 aa).

In terms of domain architecture, AB hydrolase-1 spans 51 to 360; that stretch reads NAVLICHALS…DAPQGHDAFL (310 aa). Ser-157 acts as the Nucleophile in catalysis. Arg-227 contacts substrate. Active-site residues include Asp-323 and His-356. Asp-357 lines the substrate pocket.

This sequence belongs to the AB hydrolase superfamily. MetX family. Homodimer.

The protein localises to the cytoplasm. The catalysed reaction is L-homoserine + succinyl-CoA = O-succinyl-L-homoserine + CoA. The protein operates within amino-acid biosynthesis; L-methionine biosynthesis via de novo pathway; O-succinyl-L-homoserine from L-homoserine: step 1/1. Transfers a succinyl group from succinyl-CoA to L-homoserine, forming succinyl-L-homoserine. The polypeptide is Homoserine O-succinyltransferase (Pseudomonas fluorescens (strain SBW25)).